Here is a 430-residue protein sequence, read N- to C-terminus: F-box protein At1g49990 (430 aa).

Residues 1 to 45 (METGRRRTIPEVEILARLPLRSIARFKSVCKRWKSVIESDYFRRL) form the F-box domain.

The protein is F-box protein At1g49990 of Arabidopsis thaliana (Mouse-ear cress).